The chain runs to 487 residues: Homoserine O-acetyltransferase (487 aa).

The AB hydrolase-1 domain maps to 45-352 (NVILVCHPLT…PHGHDGFLLE (308 aa)). Catalysis depends on serine 150, which acts as the Nucleophile. Arginine 219 lines the substrate pocket. Active-site residues include aspartate 313 and histidine 346. Residue aspartate 347 coordinates substrate. 2 CBS domains span residues 373 to 430 (MTNN…FQDL) and 434 to 487 (MTKD…EVLQ).

This sequence belongs to the AB hydrolase superfamily. MetX family. In terms of assembly, homodimer.

It localises to the cytoplasm. It carries out the reaction L-homoserine + acetyl-CoA = O-acetyl-L-homoserine + CoA. It functions in the pathway amino-acid biosynthesis; L-methionine biosynthesis via de novo pathway; O-acetyl-L-homoserine from L-homoserine: step 1/1. In terms of biological role, transfers an acetyl group from acetyl-CoA to L-homoserine, forming acetyl-L-homoserine. The chain is Homoserine O-acetyltransferase from Methanocorpusculum labreanum (strain ATCC 43576 / DSM 4855 / Z).